Here is a 483-residue protein sequence, read N- to C-terminus: Alpha-tubulin N-acetyltransferase (483 aa).

Positions 1 to 186 constitute an N-acetyltransferase domain; sequence MEFRFNMHPL…NNFVVYEGFF (186 aa). Acetyl-CoA contacts are provided by residues 120 to 133 and 156 to 165; these read FYVHESRQRGGLGR and SEKLLGFLQK. Disordered stretches follow at residues 204-231, 330-395, and 437-472; these read TASPNTNLFGPTFTTTEERRRSTSQTRT, ETLP…VLGS, and SVKINRPIGKSGTRGSLHDDNESVHSNGSQQGGGGH. Positions 347-369 are enriched in basic and acidic residues; it reads YDFHPHHLELHDDTEGGGSHRDQ. The span at 370-383 shows a compositional bias: low complexity; that stretch reads SLSPQSVSQQASPV.

This sequence belongs to the acetyltransferase ATAT1 family.

The catalysed reaction is L-lysyl-[alpha-tubulin] + acetyl-CoA = N(6)-acetyl-L-lysyl-[alpha-tubulin] + CoA + H(+). Its function is as follows. Specifically acetylates 'Lys-40' in alpha-tubulin on the lumenal side of microtubules. Promotes microtubule destabilization and accelerates microtubule dynamics; this activity may be independent of acetylation activity. Acetylates alpha-tubulin with a slow enzymatic rate, due to a catalytic site that is not optimized for acetyl transfer. Enters the microtubule through each end and diffuses quickly throughout the lumen of microtubules. Acetylates only long/old microtubules because of its slow acetylation rate since it does not have time to act on dynamically unstable microtubules before the enzyme is released. The chain is Alpha-tubulin N-acetyltransferase from Anopheles gambiae (African malaria mosquito).